Reading from the N-terminus, the 78-residue chain is D-alanyl carrier protein (78 aa).

The Carrier domain maps to 1-78 (MEFKNQVYGI…HIAEQLAEMK (78 aa)). Residue S36 is modified to O-(pantetheine 4'-phosphoryl)serine.

The protein belongs to the DltC family. In terms of processing, 4'-phosphopantetheine is transferred from CoA to a specific serine of apo-DCP.

Its subcellular location is the cytoplasm. The protein operates within cell wall biogenesis; lipoteichoic acid biosynthesis. Its function is as follows. Carrier protein involved in the D-alanylation of lipoteichoic acid (LTA). The loading of thioester-linked D-alanine onto DltC is catalyzed by D-alanine--D-alanyl carrier protein ligase DltA. The DltC-carried D-alanyl group is further transferred to cell membrane phosphatidylglycerol (PG) by forming an ester bond, probably catalyzed by DltD. D-alanylation of LTA plays an important role in modulating the properties of the cell wall in Gram-positive bacteria, influencing the net charge of the cell wall. The sequence is that of D-alanyl carrier protein from Bacillus pumilus (strain SAFR-032).